A 914-amino-acid polypeptide reads, in one-letter code: Trafficking kinesin-binding protein 2 (914 aa).

The span at 1–21 (MSQSQNAIFTSPTGEENLMNS) shows a compositional bias: polar residues. Residues 1–30 (MSQSQNAIFTSPTGEENLMNSNHRDSESIT) are disordered. The HAP1 N-terminal domain maps to 48–353 (EEQLPQYRLK…QEEIKELRSR (306 aa)). Residues 134–354 (QALLKRNHVL…EEIKELRSRS (221 aa)) adopt a coiled-coil conformation. Positions 359–509 (HLYFSQSYGA…KQFFAEEWQR (151 aa)) are interaction with HGS. The residue at position 420 (Ser420) is a Phosphoserine. Disordered stretches follow at residues 447–482 (QQTE…DSDL) and 765–787 (QPLP…SPCP). Positions 454-471 (LLNQGSSSEEVAGSSQKM) are enriched in polar residues. The segment covering 775-787 (STPPNSPSHSPCP) has biased composition (pro residues).

This sequence belongs to the milton family. In terms of assembly, interacts with GABA-A receptor and O-GlcNAc transferase. Interacts with HGS. Interacts with RHOT1/Miro-1 and RHOT2/Miro-2. O-glycosylated. In terms of tissue distribution, widely expressed, with highest expression in heart.

Its subcellular location is the cytoplasm. The protein localises to the early endosome. It is found in the mitochondrion. In terms of biological role, may regulate endosome-to-lysosome trafficking of membrane cargo, including EGFR. In Homo sapiens (Human), this protein is Trafficking kinesin-binding protein 2 (TRAK2).